The sequence spans 565 residues: Dihydroxy-acid dehydratase (565 aa).

Residue D83 coordinates Mg(2+). C124 contributes to the [2Fe-2S] cluster binding site. 2 residues coordinate Mg(2+): D125 and K126. K126 bears the N6-carboxylysine mark. Position 197 (C197) interacts with [2Fe-2S] cluster. Residue E451 participates in Mg(2+) binding. S477 (proton acceptor) is an active-site residue.

Belongs to the IlvD/Edd family. Homodimer. Requires [2Fe-2S] cluster as cofactor. It depends on Mg(2+) as a cofactor.

It carries out the reaction (2R)-2,3-dihydroxy-3-methylbutanoate = 3-methyl-2-oxobutanoate + H2O. The catalysed reaction is (2R,3R)-2,3-dihydroxy-3-methylpentanoate = (S)-3-methyl-2-oxopentanoate + H2O. It participates in amino-acid biosynthesis; L-isoleucine biosynthesis; L-isoleucine from 2-oxobutanoate: step 3/4. The protein operates within amino-acid biosynthesis; L-valine biosynthesis; L-valine from pyruvate: step 3/4. Functions in the biosynthesis of branched-chain amino acids. Catalyzes the dehydration of (2R,3R)-2,3-dihydroxy-3-methylpentanoate (2,3-dihydroxy-3-methylvalerate) into 2-oxo-3-methylpentanoate (2-oxo-3-methylvalerate) and of (2R)-2,3-dihydroxy-3-methylbutanoate (2,3-dihydroxyisovalerate) into 2-oxo-3-methylbutanoate (2-oxoisovalerate), the penultimate precursor to L-isoleucine and L-valine, respectively. This Symbiobacterium thermophilum (strain DSM 24528 / JCM 14929 / IAM 14863 / T) protein is Dihydroxy-acid dehydratase.